The primary structure comprises 621 residues: Frizzled and smoothened-like protein H (621 aa).

The first 21 residues, 1-21 (MNLKFYNLIFFISFLICCIHG), serve as a signal peptide directing secretion. The Extracellular portion of the chain corresponds to 22–246 (QRYLPVEGGK…VWNQIFKIND (225 aa)). Positions 27–166 (VEGGKCEKYI…IEWVKYNLTI (140 aa)) constitute an FZ domain. Cystine bridges form between C32/C103 and C46/C96. N60, N107, N163, N176, and N206 each carry an N-linked (GlcNAc...) asparagine glycan. Residues 247–267 (VLSSISLACTLILLFTFGILN) traverse the membrane as a helical segment. Residues 268 to 277 (PKLNRFDKKN) lie on the Cytoplasmic side of the membrane. Residues 278-298 (LFFIAGVFGMSVSGVLIAANG) form a helical membrane-spanning segment. Topologically, residues 299-318 (SEKTVCPTPERYAVNTDRVC) are extracellular. Residues 319–339 (VASGFLVHFSALFAILWWTIG) traverse the membrane as a helical segment. Residues 340–359 (LADVYYGIKFVGKKIKIKVR) lie on the Cytoplasmic side of the membrane. The chain crosses the membrane as a helical span at residues 360-380 (YYLLATLTISLAFTLVPLGTG). Residues 381-400 (QYQAGLSNVMCFLKDEIYQS) are Extracellular-facing. A helical transmembrane segment spans residues 401–421 (MTFFVPLGICLTMGTILMILV). At 422-464 (MREIYVIVKSNSTSSSFSSSSSKSKSKSKSSDSISYLKLQVKP) the chain is on the cytoplasmic side. Residues 465–485 (MLNIILFYFTFLYLFLFVRVI) form a helical membrane-spanning segment. At 486 to 520 (NSRYQEYEDSAIPYMLCLAKGGGDSCRLKGPSAGS) the chain is on the extracellular side. A helical transmembrane segment spans residues 521–541 (LGYFAYCLRIYGIYLFIISFL). Over 542 to 621 (SSRTIKIWKE…RNYNTDDDDL (80 aa)) the chain is Cytoplasmic. The span at 575 to 594 (FSSSKNTSTTQNSTLNNTES) shows a compositional bias: low complexity. The segment at 575-603 (FSSSKNTSTTQNSTLNNTESDTSKRGNSS) is disordered.

Belongs to the G-protein coupled receptor Fz/Smo family.

The protein localises to the membrane. The sequence is that of Frizzled and smoothened-like protein H (fslH) from Dictyostelium discoideum (Social amoeba).